Consider the following 154-residue polypeptide: UPF0178 protein RC1_2062 (154 aa).

Belongs to the UPF0178 family.

In Rhodospirillum centenum (strain ATCC 51521 / SW), this protein is UPF0178 protein RC1_2062.